The primary structure comprises 43 residues: Protein PsbN (43 aa).

A helical transmembrane segment spans residues 4–24 (ATIIVIFVSSLLVGITAYSVY).

The protein belongs to the PsbN family.

Its subcellular location is the plastid. It is found in the chloroplast thylakoid membrane. May play a role in photosystem I and II biogenesis. This Thalassiosira pseudonana (Marine diatom) protein is Protein PsbN.